A 197-amino-acid polypeptide reads, in one-letter code: Large ribosomal subunit protein bL25 (197 aa).

It belongs to the bacterial ribosomal protein bL25 family. CTC subfamily. Part of the 50S ribosomal subunit; part of the 5S rRNA/L5/L18/L25 subcomplex. Contacts the 5S rRNA. Binds to the 5S rRNA independently of L5 and L18.

Functionally, this is one of the proteins that binds to the 5S RNA in the ribosome where it forms part of the central protuberance. The polypeptide is Large ribosomal subunit protein bL25 (Carboxydothermus hydrogenoformans (strain ATCC BAA-161 / DSM 6008 / Z-2901)).